The primary structure comprises 134 residues: Acyl carrier protein SF2, chloroplastic (134 aa).

The transit peptide at 1–51 directs the protein to the chloroplast; sequence MSTTFCSSVSMQATSLAATTRISFQKPALVSTTNLSFNLRRSIPTRFSISC. One can recognise a Carrier domain in the interval 55–130; it reads PETVEKVSKI…EAAELIEELV (76 aa). Ser90 bears the O-(pantetheine 4'-phosphoryl)serine mark.

Belongs to the acyl carrier protein (ACP) family. In terms of processing, 4'-phosphopantetheine is transferred from CoA to a specific serine of apo-ACP by acpS. This modification is essential for activity because fatty acids are bound in thioester linkage to the sulfhydryl of the prosthetic group.

The protein localises to the plastid. It is found in the chloroplast. Its pathway is lipid metabolism; fatty acid biosynthesis. Functionally, carrier of the growing fatty acid chain in fatty acid biosynthesis. In Brassica campestris (Field mustard), this protein is Acyl carrier protein SF2, chloroplastic (Acl1.1).